Consider the following 105-residue polypeptide: uncharacterized protein (105 aa).

A run of 2 helical transmembrane segments spans residues 26–46 and 66–86; these read NVLIASWLSFVVFLILGCIAI and SALAWTFFVLAILFGAATLAI.

The protein localises to the cell membrane. This is an uncharacterized protein from Mycoplasma pneumoniae (strain ATCC 29342 / M129 / Subtype 1) (Mycoplasmoides pneumoniae).